Reading from the N-terminus, the 367-residue chain is NAD(P)H-quinone oxidoreductase subunit 1, chloroplastic (367 aa).

7 helical membrane passes run 30–50, 98–118, 127–147, 164–184, 273–293, 304–324, and 340–360; these read LFPILTLVLGITIGVLVIVWL, FSIGPSIAVISIFLSYSVIPF, LSIGVFFWIAISSIAPVGLLM, AAAQSISYEIPLALCVLSISL, LFVTVLYLGGWNLSIPYIFVP, VFGTLIGIFITLAKTYLFLFI, and LLNLGWKFLLPISLGNLLLTT.

The protein belongs to the complex I subunit 1 family. As to quaternary structure, NDH is composed of at least 16 different subunits, 5 of which are encoded in the nucleus.

The protein resides in the plastid. The protein localises to the chloroplast thylakoid membrane. The enzyme catalyses a plastoquinone + NADH + (n+1) H(+)(in) = a plastoquinol + NAD(+) + n H(+)(out). It carries out the reaction a plastoquinone + NADPH + (n+1) H(+)(in) = a plastoquinol + NADP(+) + n H(+)(out). Its function is as follows. NDH shuttles electrons from NAD(P)H:plastoquinone, via FMN and iron-sulfur (Fe-S) centers, to quinones in the photosynthetic chain and possibly in a chloroplast respiratory chain. The immediate electron acceptor for the enzyme in this species is believed to be plastoquinone. Couples the redox reaction to proton translocation, and thus conserves the redox energy in a proton gradient. The polypeptide is NAD(P)H-quinone oxidoreductase subunit 1, chloroplastic (Nicotiana tabacum (Common tobacco)).